The following is an 89-amino-acid chain: Small ribosomal subunit protein uS17 (89 aa).

This sequence belongs to the universal ribosomal protein uS17 family. In terms of assembly, part of the 30S ribosomal subunit.

One of the primary rRNA binding proteins, it binds specifically to the 5'-end of 16S ribosomal RNA. The protein is Small ribosomal subunit protein uS17 of Verminephrobacter eiseniae (strain EF01-2).